Reading from the N-terminus, the 74-residue chain is ATP synthase F(1) complex subunit epsilon, mitochondrial (74 aa).

Belongs to the eukaryotic ATPase epsilon family. As to quaternary structure, component of the ATP synthase complex composed at least of ATP5F1A/subunit alpha, ATP5F1B/subunit beta, ATP5MC1/subunit c (homooctomer), MT-ATP6/subunit a, MT-ATP8/subunit 8, ATP5ME/subunit e, ATP5MF/subunit f, ATP5MG/subunit g, ATP5MK/subunit k, ATP5MJ/subunit j, ATP5F1C/subunit gamma, ATP5F1D/subunit delta, ATP5F1E/subunit epsilon, ATP5PF/subunit F6, ATP5PB/subunit b, ATP5PD/subunit d, ATP5PO/subunit OSCP. ATP synthase complex consists of a soluble F(1) head domain (subunits alpha(3) and beta(3)) - the catalytic core - and a membrane F(0) domain - the membrane proton channel (subunits c, a, 8, e, f, g, k and j). These two domains are linked by a central stalk (subunits gamma, delta, and epsilon) rotating inside the F1 region and a stationary peripheral stalk (subunits F6, b, d, and OSCP).

It is found in the mitochondrion. The protein resides in the mitochondrion inner membrane. In terms of biological role, subunit epsilon, of the mitochondrial membrane ATP synthase complex (F(1)F(0) ATP synthase or Complex V) that produces ATP from ADP in the presence of a proton gradient across the membrane which is generated by electron transport complexes of the respiratory chain. ATP synthase complex consist of a soluble F(1) head domain - the catalytic core - and a membrane F(1) domain - the membrane proton channel. These two domains are linked by a central stalk rotating inside the F(1) region and a stationary peripheral stalk. During catalysis, ATP synthesis in the catalytic domain of F(1) is coupled via a rotary mechanism of the central stalk subunits to proton translocation. In vivo, can only synthesize ATP although its ATP hydrolase activity can be activated artificially in vitro. May be essential for the assembly of F(1) and may play an important role in the incorporation of the hydrophobic subunit c into the F(1)-c oligomer rotor of the mitochondrial ATP synthase complex. The protein is ATP synthase F(1) complex subunit epsilon, mitochondrial of Dictyostelium discoideum (Social amoeba).